Reading from the N-terminus, the 600-residue chain is Adenine deaminase 2 (600 aa).

Belongs to the metallo-dependent hydrolases superfamily. Adenine deaminase family. It depends on Mn(2+) as a cofactor.

It carries out the reaction adenine + H2O + H(+) = hypoxanthine + NH4(+). This Bradyrhizobium sp. (strain ORS 278) protein is Adenine deaminase 2.